We begin with the raw amino-acid sequence, 105 residues long: uncharacterized protein (105 aa).

Disordered regions lie at residues 29-55 and 72-105; these read HTRVGVTDPDPRVPPLLPGPAGVTDES and EQRGDRRAVRCEPAGEPPLDDVRTPAAPAVRSGR. The span at 72–81 shows a compositional bias: basic and acidic residues; sequence EQRGDRRAVR.

This is an uncharacterized protein from Streptomyces coelicolor (strain ATCC BAA-471 / A3(2) / M145).